The following is a 219-amino-acid chain: Charged multivesicular body protein 5 (219 aa).

Over residues 1–10 (MNRLFGKAKP) the composition is skewed to basic residues. The segment at 1–21 (MNRLFGKAKPKAPPPSLTDCI) is disordered. K7 is lipidated: (Microbial infection) N6-stearoyl lysine. A coiled-coil region spans residues 26–179 (SRAESIDKKI…LGDELLADED (154 aa)). Position 86 is a phosphoserine (S86). Residues 121 to 158 (KQVKIDQIEDLQDQLEDMMEDANEIQEALSRSYGTPEL) are interaction with VTA1. A disordered region spans residues 188-219 (SAPAIPEGVPTDTKNKDGVLVDEFGLPQIPAS).

It belongs to the SNF7 family. As to quaternary structure, probable peripherally associated component of the endosomal sorting required for transport complex III (ESCRT-III). ESCRT-III components are thought to multimerize to form a flat lattice on the perimeter membrane of the endosome. Several assembly forms of ESCRT-III may exist that interact and act sequentially. Interacts with VTA1; the interaction involves soluble CHMP5. Interacts with CHMP2A. Interacts with NOD2. Interacts with BROX. Post-translationally, (Microbial infection) Stearoylated By S.flexneri N-epsilon-fatty acyltransferase IcsB, promoting S.flexneri evasion of autophagy. In terms of processing, ISGylated. Isgylation inhibits its interaction with VTA1.

Its subcellular location is the cytoplasm. The protein resides in the cytosol. It localises to the endosome membrane. The protein localises to the midbody. In terms of biological role, probable peripherally associated component of the endosomal sorting required for transport complex III (ESCRT-III) which is involved in multivesicular bodies (MVBs) formation and sorting of endosomal cargo proteins into MVBs. MVBs contain intraluminal vesicles (ILVs) that are generated by invagination and scission from the limiting membrane of the endosome and mostly are delivered to lysosomes enabling degradation of membrane proteins, such as stimulated growth factor receptors, lysosomal enzymes and lipids. The MVB pathway appears to require the sequential function of ESCRT-O, -I,-II and -III complexes. ESCRT-III proteins mostly dissociate from the invaginating membrane before the ILV is released. The ESCRT machinery also functions in topologically equivalent membrane fission events, such as the terminal stages of cytokinesis and the budding of enveloped viruses (HIV-1 and other lentiviruses). ESCRT-III proteins are believed to mediate the necessary vesicle extrusion and/or membrane fission activities, possibly in conjunction with the AAA ATPase VPS4. Involved in HIV-1 p6- and p9-dependent virus release. In Homo sapiens (Human), this protein is Charged multivesicular body protein 5 (CHMP5).